Consider the following 85-residue polypeptide: Alpha-toxin Amm8 (85 aa).

Residues 1–19 (MNYLVMISLALLFMTGVES) form the signal peptide. In terms of domain architecture, LCN-type CS-alpha/beta spans 21-83 (KDGYIVNDIN…VRTKGPGRCN (63 aa)). 4 cysteine pairs are disulfide-bonded: cysteine 31/cysteine 82, cysteine 35/cysteine 55, cysteine 41/cysteine 65, and cysteine 45/cysteine 67. A propeptide (removed by a carboxypeptidase) is located at residue arginine 85.

Belongs to the long (4 C-C) scorpion toxin superfamily. Sodium channel inhibitor family. Alpha subfamily. In terms of tissue distribution, expressed by the venom gland.

The protein resides in the secreted. In terms of biological role, alpha toxins bind voltage-independently at site-3 of sodium channels (Nav) and inhibit the inactivation of the activated channels, thereby blocking neuronal transmission. The toxin principally slows the inactivation process of TTX-sensitive sodium channels. It discriminates neuronal versus muscular sodium channel, as it is more potent on rat brain Nav1.2/SCN2A (EC(50)=29 nM) than on rat skeletal muscle Nav1.4/SCN4A (EC(50)=416 nM). It also shows a weak activity on Nav1.7/SCN9A (EC(50)=1.76 uM). In vivo, the toxin produces pain hypersensibility to mechanical and thermal stimuli. It also exhibits potent analgesic activity (when injected intraperitoneally), increasing hot plate and tail flick withdrawal latencies in a dose-dependent fashion. This paradoxical analgesic action, is significantly suppressed by opioid receptor antagonists, suggesting a pain-induced analgesia mechanism that involves an endogenous opioid system. This led to hypothesis that pain relief induced by peripheral administration of Amm VIII may result from sensitization of primary afferent neurons and subsequent activation of an opioid-dependent noxious inhibitory control. This chain is Alpha-toxin Amm8, found in Androctonus mauritanicus mauritanicus (Scorpion).